Consider the following 23-residue polypeptide: Paralytic peptide 2 (23 aa).

Cysteine 7 and cysteine 19 form a disulfide bridge.

Belongs to the GBP/PSP1/paralytic peptide family. Hemolymph.

Causes rapid, rigid paralysis when injected into Lepidopteran larvae. The physiological role may be to reduce hemolymph loss following injury and promote wound healing. This Manduca sexta (Tobacco hawkmoth) protein is Paralytic peptide 2.